A 243-amino-acid polypeptide reads, in one-letter code: Phosphoribosylaminoimidazole-succinocarboxamide synthase (243 aa).

This sequence belongs to the SAICAR synthetase family.

The catalysed reaction is 5-amino-1-(5-phospho-D-ribosyl)imidazole-4-carboxylate + L-aspartate + ATP = (2S)-2-[5-amino-1-(5-phospho-beta-D-ribosyl)imidazole-4-carboxamido]succinate + ADP + phosphate + 2 H(+). Its pathway is purine metabolism; IMP biosynthesis via de novo pathway; 5-amino-1-(5-phospho-D-ribosyl)imidazole-4-carboxamide from 5-amino-1-(5-phospho-D-ribosyl)imidazole-4-carboxylate: step 1/2. This is Phosphoribosylaminoimidazole-succinocarboxamide synthase from Lactiplantibacillus plantarum (strain ATCC BAA-793 / NCIMB 8826 / WCFS1) (Lactobacillus plantarum).